We begin with the raw amino-acid sequence, 179 residues long: Caveolin-1 (179 aa).

Ser2 carries the post-translational modification N-acetylserine. Phosphoserine is present on Ser2. The segment at 2–95 is required for homooligomerization; the sequence is SGGKYVDSEG…WKASFTTFTV (94 aa). Over 2-105 the chain is Cytoplasmic; it reads SGGKYVDSEG…TKYWFYRLLS (104 aa). Lys5 carries the N6-acetyllysine; alternate modification. Lys5 participates in a covalent cross-link: Glycyl lysine isopeptide (Lys-Gly) (interchain with G-Cter in ubiquitin); alternate. Tyr6 bears the Phosphotyrosine mark. Ser9 is modified (phosphoserine). Tyr14 is subject to Phosphotyrosine; by ABL1. Tyr25 is modified (phosphotyrosine). Residues Lys26 and Lys30 each participate in a glycyl lysine isopeptide (Lys-Gly) (interchain with G-Cter in ubiquitin) cross-link. Phosphoserine is present on Ser37. Glycyl lysine isopeptide (Lys-Gly) (interchain with G-Cter in ubiquitin) cross-links involve residues Lys39, Lys48, and Lys58. Positions 83-95 are interaction with CAVIN3; sequence DGIWKASFTTFTV. An intramembrane region (helical) is located at residues 106 to 126; sequence ALFGIPMALIWGIYFAILSFL. At 127 to 179 the chain is on the cytoplasmic side; the sequence is HIWAVVPCIKSFLIEIQCISRVYSIYVHTFCDPLFEAIGKVFSNIRINMQKEI. The interval 132–143 is interacts with SPRY1, SPRY2, SPRY3 and SPRY4; sequence VPCIKSFLIEIQ. Residues Cys134, Cys144, and Cys157 are each lipidated (S-palmitoyl cysteine). The interval 150 to 161 is interacts with SPRY1, SPRY2, and SPRY4; that stretch reads SIYVHTFCDPLF. An interacts with SPRY1, SPRY2, SPRY3 and SPRY4 region spans residues 168 to 179; it reads FSNIRINMQKEI.

This sequence belongs to the caveolin family. Homooligomer. Interacts with GLIPR2. Interacts with NOSTRIN. Interacts with SNAP25 and STX1A. Interacts (via the N-terminus) with DPP4; the interaction is direct. Interacts with CTNNB1, CDH1 and JUP. Interacts with PACSIN2; this interaction induces membrane tubulation. Interacts with SLC7A9. Interacts with BMX and BTK. Interacts with TGFBR1. Interacts with CAVIN3 (via leucine-zipper domain) in a cholesterol-sensitive manner. Interacts with CAVIN1. Interacts with EHD2 in a cholesterol-dependent manner. Forms a ternary complex with UBXN6 and VCP; mediates CAV1 targeting to lysosomes for degradation. Interacts with ABCG1; this interaction regulates ABCG1-mediated cholesterol efflux. Interacts with NEU3; this interaction enhances NEU3 sialidase activity within caveola. Interacts (via C-terminus) with SPRY1, SPRY2 (via C-terminus), SPRY3, and SPRY4. Interacts with IGFBP5; this interaction allows trafficking of IGFBP5 from the plasma membrane to the nucleus. Post-translationally, phosphorylated at Tyr-14 by ABL1 in response to oxidative stress. Ubiquitinated. Undergo monoubiquitination and multi- and/or polyubiquitination. Monoubiquitination of N-terminal lysines promotes integration in a ternary complex with UBXN6 and VCP which promotes oligomeric CAV1 targeting to lysosomes for degradation. Ubiquitinated by ZNRF1; leading to degradation and modulation of the TLR4-mediated immune response.

The protein localises to the golgi apparatus membrane. It localises to the cell membrane. It is found in the membrane. The protein resides in the caveola. Its subcellular location is the membrane raft. In terms of biological role, may act as a scaffolding protein within caveolar membranes. Forms a stable heterooligomeric complex with CAV2 that targets to lipid rafts and drives caveolae formation. Mediates the recruitment of CAVIN proteins (CAVIN1/2/3/4) to the caveolae. Interacts directly with G-protein alpha subunits and can functionally regulate their activity. Involved in the costimulatory signal essential for T-cell receptor (TCR)-mediated T-cell activation. Its binding to DPP4 induces T-cell proliferation and NF-kappa-B activation in a T-cell receptor/CD3-dependent manner. Recruits CTNNB1 to caveolar membranes and may regulate CTNNB1-mediated signaling through the Wnt pathway. Negatively regulates TGFB1-mediated activation of SMAD2/3 by mediating the internalization of TGFBR1 from membrane rafts leading to its subsequent degradation. Binds 20(S)-hydroxycholesterol (20(S)-OHC). This is Caveolin-1 (CAV1) from Eulemur macaco macaco (Black lemur).